A 412-amino-acid chain; its full sequence is MNHTRVEQNRGRTARKLRLALMGPAFIAAIGYIDPGNFATNIQAGASFGYQLLWVVVWANLMAMLIQVLSAKLGIATGKNLAEQIRDHYPRPVVWFYWVQAEIIAMATDLAEFIGAAIGFKLILGVSLLQGAVLTGIATFLILMLQKRGQKPLEKVIGGLLLFVAAAYIVELFFSQPKLAELGKGMLIPSLPTSEAVFLAAGVLGATIMPHVIYLHSSLTQNLHDGSRKERYSATKWDVAIAMTIAGFVNLAMMATAAAAFHFSGHTKVAELDQAYLTLEPLLSHAAATIFGLSLVAAGLSSTVVGTLAGQVVMQGFVRFSIPLWVRRAVTMAPSFIVILMGLDPTRILVMSQVLLSFGIALALVPLLFFTSNKALMAELVNTPWVKRTGWAIVVLVVALNIWLLVGTALGL.

11 helical membrane passes run 19 to 39 (LALMGPAFIAAIGYIDPGNFA), 46 to 66 (ASFGYQLLWVVVWANLMAMLI), 94 to 114 (VWFYWVQAEIIAMATDLAEFI), 122 to 142 (LILGVSLLQGAVLTGIATFLI), 156 to 176 (VIGGLLLFVAAAYIVELFFSQ), 196 to 216 (AVFLAAGVLGATIMPHVIYLH), 241 to 261 (IAMTIAGFVNLAMMATAAAAF), 290 to 310 (IFGLSLVAAGLSSTVVGTLAG), 322 to 342 (IPLWVRRAVTMAPSFIVILMG), 348 to 368 (ILVMSQVLLSFGIALALVPLL), and 392 to 412 (AIVVLVVALNIWLLVGTALGL).

It belongs to the NRAMP family.

The protein resides in the cell inner membrane. H(+)-stimulated, divalent metal cation uptake system. This Cronobacter sakazakii (strain ATCC BAA-894) (Enterobacter sakazakii) protein is Divalent metal cation transporter MntH.